The following is a 1094-amino-acid chain: RecBCD enzyme subunit RecB (1094 aa).

A UvrD-like helicase ATP-binding domain is found at 1–326 (MDRFELLGPL…YTLGVNWRSD (326 aa)). Residues 1–713 (MDRFELLGPL…LLRGRRPGQS (713 aa)) form a DNA-binding and helicase activity, interacts with RecC region. 21 to 28 (ASAGTGKT) contacts ATP. A UvrD-like helicase C-terminal domain is found at 357 to 613 (AGHRLASAPR…QIMTVFVAKG (257 aa)). Residues 775-1094 (TWRRTSYSDL…DLLDRGRLQS (320 aa)) are nuclease activity, interacts with RecD and RecA. Mg(2+)-binding residues include His-838, Asp-975, and Asp-989. Residue Asp-989 is the For nuclease activity of the active site.

Belongs to the helicase family. UvrD subfamily. In terms of assembly, heterotrimer of RecB, RecC and RecD. All subunits contribute to DNA-binding. Interacts with RecA. The cofactor is Mg(2+).

It catalyses the reaction Exonucleolytic cleavage (in the presence of ATP) in either 5'- to 3'- or 3'- to 5'-direction to yield 5'-phosphooligonucleotides.. The enzyme catalyses Couples ATP hydrolysis with the unwinding of duplex DNA by translocating in the 3'-5' direction.. The catalysed reaction is ATP + H2O = ADP + phosphate + H(+). Functionally, a helicase/nuclease that prepares dsDNA breaks (DSB) for recombinational DNA repair. Binds to DSBs and unwinds DNA via a highly rapid and processive ATP-dependent bidirectional helicase activity. In the holoenzyme this subunit contributes ATPase, 3'-5' helicase, exonuclease activity and loads RecA onto ssDNA. Unlike the case in E.coli, suppresses RecA-dependent homologous recombination, is instead required for single-strand annealing pathway repair of DSB. The chain is RecBCD enzyme subunit RecB from Mycobacterium tuberculosis (strain CDC 1551 / Oshkosh).